Here is a 413-residue protein sequence, read N- to C-terminus: Tryptophan synthase beta chain (413 aa).

K107 carries the N6-(pyridoxal phosphate)lysine modification.

Belongs to the TrpB family. As to quaternary structure, tetramer of two alpha and two beta chains. Requires pyridoxal 5'-phosphate as cofactor.

It catalyses the reaction (1S,2R)-1-C-(indol-3-yl)glycerol 3-phosphate + L-serine = D-glyceraldehyde 3-phosphate + L-tryptophan + H2O. It functions in the pathway amino-acid biosynthesis; L-tryptophan biosynthesis; L-tryptophan from chorismate: step 5/5. In terms of biological role, the beta subunit is responsible for the synthesis of L-tryptophan from indole and L-serine. This is Tryptophan synthase beta chain from Trichormus variabilis (strain ATCC 29413 / PCC 7937) (Anabaena variabilis).